The primary structure comprises 138 residues: MPESAPSTPPSVNRRHEPEMLSEYPSLMFEHSYLASPSSPIDQVHDELKHSQKRPRLTNDEETIPEEDDSTVRLTDSELEDPVSSNELIQTSCHLLTSVLTQLQTNLDKLKDSHQKALLRIQELEKKVSELSKNNKDS.

2 disordered regions span residues 1 to 23 (MPESAPSTPPSVNRRHEPEMLSE) and 35 to 83 (ASPS…EDPV). A compositionally biased stretch (acidic residues) spans 60–69 (DEETIPEEDD).

This is an uncharacterized protein from Schizosaccharomyces pombe (strain 972 / ATCC 24843) (Fission yeast).